Here is a 654-residue protein sequence, read N- to C-terminus: Endoplasmic reticulum chaperone BiP (654 aa).

The signal sequence occupies residues M1–A18. Residues M1–A80 form a required for interaction with ELAPOR1 region. ATP is bound at residue G36–Y39. Position 86 is a phosphoserine (S86). Residue K96 participates in ATP binding. K125 is modified (N6-acetyllysine). The interval K125–K280 is nucleotide-binding (NBD). The residue at position 160 (Y160) is a 3'-nitrotyrosine. K213 is subject to N6-acetyllysine. G227 to T229 is an ATP binding site. At K271 the chain carries N6-acetyllysine. E293–S300 serves as a coordination point for ATP. K326 carries the post-translational modification N6-acetyllysine. Residue K352 forms a Glycyl lysine isopeptide (Lys-Gly) (interchain with G-Cter in SUMO2) linkage. Position 353 is an N6-acetyllysine; alternate (K353). A Glycyl lysine isopeptide (Lys-Gly) (interchain with G-Cter in SUMO1); alternate cross-link involves residue K353. G364–R367 serves as a coordination point for ATP. Residues Q409–V419 form an interdomain linker region. The interval C420–T500 is substrate-binding (SBD). The residue at position 447 (K447) is an N6-succinyllysine. Residue R492 is modified to Omega-N-methylarginine. Position 518 is an O-AMP-threonine; alternate (T518). Residue T518 is modified to Phosphothreonine; alternate. At K585 the chain carries N6,N6,N6-trimethyllysine; by METTL21A; in vitro. K585 carries the N6,N6-dimethyllysine; alternate modification. K585 carries the N6-methyllysine; alternate modification. Residue K591 is modified to N6-methyllysine. The segment at S632–L654 is disordered. Phosphothreonine occurs at positions 643 and 648. Residues G644–L654 show a composition bias toward acidic residues. S649 bears the Phosphoserine mark. The Prevents secretion from ER signature appears at R651–L654.

This sequence belongs to the heat shock protein 70 family. Monomer and homooligomer; homooligomerization via the interdomain linker inactivates the chaperone activity and acts as a storage of HSPA5/BiP molecules. Interacts with DNAJC1 (via J domain). Component of an EIF2 complex at least composed of CELF1/CUGBP1, CALR, CALR3, EIF2S1, EIF2S2, HSP90B1 and HSPA5. Part of a large chaperone multiprotein complex comprising DNAJB11, HSP90B1, HSPA5, HYOU, PDIA2, PDIA4, PDIA6, PPIB, SDF2L1, UGGT1 and very small amounts of ERP29, but not, or at very low levels, CALR nor CANX. Interacts with TMEM132A and TRIM21. May form a complex with ERLEC1, OS9, SEL1L and SYVN1. Interacts with DNAJC10. Interacts with DNAJB9/ERdj4; leading to recruit HSPA5/BiP to ERN1/IRE1. Interacts with ERN1/IRE1 (via luminal domain); the interaction takes place following interaction with DNAJB9/ERdj4 and leads to inactivate ERN1/IRE1, the interaction also competitively inhibits ERN1 interaction with MANF. Interacts directly with MANF (via SAP domain); the interaction inhibits ATP binding to HSPA5/BiP and subsequent nucleotide exchange. Interacts with EIF2AK3/PERK (via luminal domain); interaction leads to inactivate EIF2AK3/PERK. Interacts with MX1. Interacts with METTL23. Interacts with CEMIP; the interaction induces calcium leakage from the endoplasmic reticulum and cell migration. Interacts with PCSK4 form; the interaction takes place in the endoplasmic reticulum. Interacts with CIPC. Interacts with CCDC88B (via C-terminus); the interaction opposes ERN1-mediated JNK activation, protecting against apoptosis. Interacts with INPP5K; necessary for INPP5K localization at the endoplasmic reticulum. Interacts with MANF; the interaction is direct. Interacts with LOXL2; leading to activate the ERN1/IRE1-XBP1 pathway of the unfolded protein response. Interacts with CLU under stressed condition; interaction increases CLU protein stability; facilitates its retrotranslocation and redistribution to the mitochondria; cooperatively suppress stress-induced apoptosis by stabilizing mitochondrial membrane integrity. Interacts with CCDC47. Interacts with CLN3. Interacts with ELAPOR1; may regulate the function of HSPA5 in apoptosis and cell proliferation. Interacts with CASP7. Interacts with ILDR2; the interaction stabilizes ILDR2 expression. Interacts with ADAM7. Post-translationally, in unstressed cells, AMPylation at Thr-518 by FICD inactivates the chaperome activity: AMPylated form is locked in a relatively inert state and only weakly stimulated by J domain-containing proteins. In response to endoplasmic reticulum stress, de-AMPylation by the same protein, FICD, restores the chaperone activity.

The protein localises to the endoplasmic reticulum lumen. It is found in the melanosome. The protein resides in the cytoplasm. It localises to the cell surface. The enzyme catalyses ATP + H2O = ADP + phosphate + H(+). With respect to regulation, the chaperone activity is regulated by ATP-induced allosteric coupling of the nucleotide-binding (NBD) and substrate-binding (SBD) domains. In the ADP-bound and nucleotide-free (apo) states, the two domains have little interaction. In contrast, in the ATP-bound state the two domains are tightly coupled, which results in drastically accelerated kinetics in both binding and release of polypeptide substrates. J domain-containing co-chaperones (DNAJB9/ERdj4 or DNAJC10/ERdj5) stimulate the ATPase activity and are required for efficient substrate recognition by HSPA5/BiP. Homooligomerization inactivates participating HSPA5/BiP protomers and probably act as reservoirs to store HSPA5/BiP molecules when they are not needed by the cell. In terms of biological role, endoplasmic reticulum chaperone that plays a key role in protein folding and quality control in the endoplasmic reticulum lumen. Involved in the correct folding of proteins and degradation of misfolded proteins via its interaction with DNAJC10/ERdj5, probably to facilitate the release of DNAJC10/ERdj5 from its substrate. Acts as a key repressor of the EIF2AK3/PERK and ERN1/IRE1-mediated unfolded protein response (UPR). In the unstressed endoplasmic reticulum, recruited by DNAJB9/ERdj4 to the luminal region of ERN1/IRE1, leading to disrupt the dimerization of ERN1/IRE1, thereby inactivating ERN1/IRE1. Also binds and inactivates EIF2AK3/PERK in unstressed cells. Accumulation of misfolded protein in the endoplasmic reticulum causes release of HSPA5/BiP from ERN1/IRE1 and EIF2AK3/PERK, allowing their homodimerization and subsequent activation. Plays an auxiliary role in post-translational transport of small presecretory proteins across endoplasmic reticulum (ER). May function as an allosteric modulator for SEC61 channel-forming translocon complex, likely cooperating with SEC62 to enable the productive insertion of these precursors into SEC61 channel. Appears to specifically regulate translocation of precursors having inhibitory residues in their mature region that weaken channel gating. May also play a role in apoptosis and cell proliferation. The sequence is that of Endoplasmic reticulum chaperone BiP from Ictidomys tridecemlineatus (Thirteen-lined ground squirrel).